The sequence spans 93 residues: MAERRVNVGWAEGLHARPASIFVRAATATGVPVTIAKADGSPVNAASMLAVLGLGAQGGEEIVLASDAEGAEAALERLAKLVAEGLEELPETV.

One can recognise an HPr domain in the interval 2 to 89; sequence AERRVNVGWA…KLVAEGLEEL (88 aa). The active-site Pros-phosphohistidine intermediate is the histidine 15.

The protein belongs to the HPr family.

The protein resides in the cytoplasm. General (non sugar-specific) component of the phosphoenolpyruvate-dependent sugar phosphotransferase system (sugar PTS). This major carbohydrate active-transport system catalyzes the phosphorylation of incoming sugar substrates concomitantly with their translocation across the cell membrane. The phosphoryl group from phosphoenolpyruvate (PEP) is transferred to the phosphoryl carrier protein HPr by enzyme I. Phospho-HPr then transfers it to the PTS EIIA domain. The protein is Phosphocarrier protein HPr (ptsH) of Streptomyces coelicolor (strain ATCC BAA-471 / A3(2) / M145).